The primary structure comprises 743 residues: Phosphoribosylformylglycinamidine synthase subunit PurL (743 aa).

Histidine 50 is a catalytic residue. 2 residues coordinate ATP: tyrosine 53 and lysine 92. Residue glutamate 94 participates in Mg(2+) binding. Substrate is bound by residues 95-98 (SHNH) and arginine 117. Histidine 96 acts as the Proton acceptor in catalysis. Aspartate 118 provides a ligand contact to Mg(2+). Glutamine 241 provides a ligand contact to substrate. Aspartate 269 contacts Mg(2+). 313 to 315 (ESQ) serves as a coordination point for substrate. Aspartate 495 and glycine 532 together coordinate ATP. Asparagine 533 lines the Mg(2+) pocket. Substrate is bound at residue serine 535.

The protein belongs to the FGAMS family. Monomer. Part of the FGAM synthase complex composed of 1 PurL, 1 PurQ and 2 PurS subunits.

It is found in the cytoplasm. It carries out the reaction N(2)-formyl-N(1)-(5-phospho-beta-D-ribosyl)glycinamide + L-glutamine + ATP + H2O = 2-formamido-N(1)-(5-O-phospho-beta-D-ribosyl)acetamidine + L-glutamate + ADP + phosphate + H(+). The protein operates within purine metabolism; IMP biosynthesis via de novo pathway; 5-amino-1-(5-phospho-D-ribosyl)imidazole from N(2)-formyl-N(1)-(5-phospho-D-ribosyl)glycinamide: step 1/2. Its function is as follows. Part of the phosphoribosylformylglycinamidine synthase complex involved in the purines biosynthetic pathway. Catalyzes the ATP-dependent conversion of formylglycinamide ribonucleotide (FGAR) and glutamine to yield formylglycinamidine ribonucleotide (FGAM) and glutamate. The FGAM synthase complex is composed of three subunits. PurQ produces an ammonia molecule by converting glutamine to glutamate. PurL transfers the ammonia molecule to FGAR to form FGAM in an ATP-dependent manner. PurS interacts with PurQ and PurL and is thought to assist in the transfer of the ammonia molecule from PurQ to PurL. This Rhizobium leguminosarum bv. trifolii (strain WSM2304) protein is Phosphoribosylformylglycinamidine synthase subunit PurL.